We begin with the raw amino-acid sequence, 441 residues long: E3 ubiquitin-protein ligase APD1 (441 aa).

The next 2 membrane-spanning stretches (helical) occupy residues 60–80 (SNLY…FILI) and 305–325 (IAYV…IQFC). The segment at 390 to 429 (CAICFDVPRDCFFLPCGHSVSCYECGTTMQEADGSCPICR) adopts an RING-type zinc-finger fold.

In terms of tissue distribution, expressed in the shoot apical meristems (SAM), root tips and inflorescences, and, at low levels, in floral buds and pollen.

It localises to the endomembrane system. Its subcellular location is the vacuole membrane. The enzyme catalyses S-ubiquitinyl-[E2 ubiquitin-conjugating enzyme]-L-cysteine + [acceptor protein]-L-lysine = [E2 ubiquitin-conjugating enzyme]-L-cysteine + N(6)-ubiquitinyl-[acceptor protein]-L-lysine.. It functions in the pathway protein modification; protein ubiquitination. In terms of biological role, involved in pollen mitosis II (PMII) regulation during male gametogenesis. The protein is E3 ubiquitin-protein ligase APD1 of Arabidopsis thaliana (Mouse-ear cress).